The sequence spans 505 residues: Maturase K (505 aa).

This sequence belongs to the intron maturase 2 family. MatK subfamily.

The protein resides in the plastid. It localises to the chloroplast. Usually encoded in the trnK tRNA gene intron. Probably assists in splicing its own and other chloroplast group II introns. The chain is Maturase K from Morus alba (White mulberry).